The sequence spans 94 residues: Small ribosomal subunit protein uS19 (94 aa).

The disordered stretch occupies residues 73-94; sequence EFSPTRRFGGHADKKSKKGQVK.

It belongs to the universal ribosomal protein uS19 family.

In terms of biological role, protein S19 forms a complex with S13 that binds strongly to the 16S ribosomal RNA. In Kosmotoga olearia (strain ATCC BAA-1733 / DSM 21960 / TBF 19.5.1), this protein is Small ribosomal subunit protein uS19.